A 264-amino-acid chain; its full sequence is Probable aquaporin TIP3-1 (264 aa).

A run of 2 helical transmembrane segments spans residues 28–48 and 62–82; these read AAISEFLATAIFVFAAEGSIL and GLVAVSLAHALALAVAVAVAV. The short motif at 90-92 is the NPA 1 element; sequence NPA. 3 consecutive transmembrane segments (helical) span residues 105–125, 149–169, and 176–196; these read LIRALFYWLAQLLGAVVATLL, AVLLEATMTFGLMYAYYATVI, and VGTIAPLAVGFLLGANMLAGG. The NPA 2 signature appears at 204–206; sequence NPA. Residues 224–244 traverse the membrane as a helical segment; it reads YWLGPFVGAGLAGLLYEYLVI.

It belongs to the MIP/aquaporin (TC 1.A.8) family. TIP (TC 1.A.8.10) subfamily. Expressed in leaves and at lower levels in roots.

It localises to the vacuole membrane. Functionally, aquaporins facilitate the transport of water and small neutral solutes across cell membranes. May be involved in transport from the vacuolar compartment to the cytoplasm. This Oryza sativa subsp. japonica (Rice) protein is Probable aquaporin TIP3-1 (TIP3-1).